Here is a 382-residue protein sequence, read N- to C-terminus: Mannitol-1-phosphate 5-dehydrogenase (382 aa).

3 to 14 (ALHFGAGNIGRG) is a binding site for NAD(+).

Belongs to the mannitol dehydrogenase family.

It carries out the reaction D-mannitol 1-phosphate + NAD(+) = beta-D-fructose 6-phosphate + NADH + H(+). The polypeptide is Mannitol-1-phosphate 5-dehydrogenase (Salmonella dublin (strain CT_02021853)).